The sequence spans 173 residues: DELTA-actitoxin-Oor1b (173 aa).

The N-terminal region stretch occupies residues 6–25 (GAALGFNVHQTVLKALGQVS). Ser-49, Val-82, Ser-100, Pro-102, Tyr-128, and Tyr-133 together coordinate phosphocholine. A trp-rich region, which is important for the binding to lipid membrane region spans residues 100–115 (SVPFDYNLYSNWWDVK).

The protein belongs to the actinoporin family. Sea anemone subfamily. As to quaternary structure, octamer or nonamer in membranes. Monomer in the soluble state.

Its subcellular location is the secreted. The protein resides in the nematocyst. It localises to the target cell membrane. In terms of biological role, pore-forming protein that forms cations-selective hydrophilic pores of around 1 nm and causes cardiac stimulation and cytolysis. Pore formation is a multi-step process that involves specific recognition of membrane sphingomyelin (but neither cholesterol nor phosphatidylcholine) using aromatic rich region and adjacent phosphocholine (POC) binding site, firm binding to the membrane (mainly driven by hydrophobic interactions) accompanied by the transfer of the N-terminal region to the lipid-water interface and finally pore formation after oligomerization of monomers. Cytolytic effects include red blood cells hemolysis, platelet aggregation and lysis, cytotoxic and cytostatic effects on fibroblasts. Lethality in mammals has been ascribed to severe vasospasm of coronary vessels, cardiac arrhythmia, and inotropic effects. This Oulactis orientalis (Japan anemone) protein is DELTA-actitoxin-Oor1b.